A 92-amino-acid chain; its full sequence is Protein 10 (92 aa).

Residues 18–29 form the EF-hand domain; that stretch reads FMQKYDKNSDQH.

Belongs to the calbindin family. As to expression, brain.

In Cavia porcellus (Guinea pig), this protein is Protein 10.